The following is an 83-amino-acid chain: Small ribosomal subunit protein bS16 (83 aa).

It belongs to the bacterial ribosomal protein bS16 family.

The chain is Small ribosomal subunit protein bS16 from Acinetobacter baumannii (strain AB307-0294).